The sequence spans 265 residues: 2-C-methyl-D-erythritol 4-phosphate cytidylyltransferase (265 aa).

Residues 231 to 241 (DRGGASREAER) show a composition bias toward basic and acidic residues. The tract at residues 231-265 (DRGGASREAERSAMPSAATSVFSGARSAASGSEEV) is disordered. Residues 253 to 265 (SGARSAASGSEEV) show a composition bias toward low complexity.

Belongs to the IspD/TarI cytidylyltransferase family. IspD subfamily.

It catalyses the reaction 2-C-methyl-D-erythritol 4-phosphate + CTP + H(+) = 4-CDP-2-C-methyl-D-erythritol + diphosphate. Its pathway is isoprenoid biosynthesis; isopentenyl diphosphate biosynthesis via DXP pathway; isopentenyl diphosphate from 1-deoxy-D-xylulose 5-phosphate: step 2/6. Catalyzes the formation of 4-diphosphocytidyl-2-C-methyl-D-erythritol from CTP and 2-C-methyl-D-erythritol 4-phosphate (MEP). The protein is 2-C-methyl-D-erythritol 4-phosphate cytidylyltransferase of Xanthomonas campestris pv. campestris (strain B100).